The following is a 512-amino-acid chain: ATP synthase subunit alpha (512 aa).

169 to 176 (GDRQTGKT) lines the ATP pocket.

The protein belongs to the ATPase alpha/beta chains family. F-type ATPases have 2 components, CF(1) - the catalytic core - and CF(0) - the membrane proton channel. CF(1) has five subunits: alpha(3), beta(3), gamma(1), delta(1), epsilon(1). CF(0) has three main subunits: a(1), b(2) and c(9-12). The alpha and beta chains form an alternating ring which encloses part of the gamma chain. CF(1) is attached to CF(0) by a central stalk formed by the gamma and epsilon chains, while a peripheral stalk is formed by the delta and b chains.

The protein resides in the cell inner membrane. It carries out the reaction ATP + H2O + 4 H(+)(in) = ADP + phosphate + 5 H(+)(out). Its function is as follows. Produces ATP from ADP in the presence of a proton gradient across the membrane. The alpha chain is a regulatory subunit. This Rickettsia bellii (strain OSU 85-389) protein is ATP synthase subunit alpha.